The following is a 241-amino-acid chain: Ribosomal RNA small subunit methyltransferase J (241 aa).

S-adenosyl-L-methionine contacts are provided by residues 94-95 and Asp163; that span reads RD.

The protein belongs to the methyltransferase superfamily. RsmJ family.

The protein localises to the cytoplasm. The enzyme catalyses guanosine(1516) in 16S rRNA + S-adenosyl-L-methionine = N(2)-methylguanosine(1516) in 16S rRNA + S-adenosyl-L-homocysteine + H(+). Functionally, specifically methylates the guanosine in position 1516 of 16S rRNA. The protein is Ribosomal RNA small subunit methyltransferase J of Francisella tularensis subsp. novicida (strain U112).